We begin with the raw amino-acid sequence, 268 residues long: Tryptophan synthase alpha chain (268 aa).

Residues Glu49 and Asp60 each act as proton acceptor in the active site.

Belongs to the TrpA family. Tetramer of two alpha and two beta chains.

The enzyme catalyses (1S,2R)-1-C-(indol-3-yl)glycerol 3-phosphate + L-serine = D-glyceraldehyde 3-phosphate + L-tryptophan + H2O. It functions in the pathway amino-acid biosynthesis; L-tryptophan biosynthesis; L-tryptophan from chorismate: step 5/5. Functionally, the alpha subunit is responsible for the aldol cleavage of indoleglycerol phosphate to indole and glyceraldehyde 3-phosphate. This is Tryptophan synthase alpha chain from Xanthomonas axonopodis pv. citri (strain 306).